A 464-amino-acid polypeptide reads, in one-letter code: Fumarate hydratase class II (464 aa).

Substrate is bound by residues serine 96–threonine 98, histidine 127–aspartate 130, serine 137–asparagine 139, and threonine 185. Histidine 186 functions as the Proton donor/acceptor in the catalytic mechanism. Serine 316 is a catalytic residue. Substrate-binding positions include serine 317 and lysine 322–asparagine 324.

Belongs to the class-II fumarase/aspartase family. Fumarase subfamily. In terms of assembly, homotetramer.

Its subcellular location is the cytoplasm. The enzyme catalyses (S)-malate = fumarate + H2O. It functions in the pathway carbohydrate metabolism; tricarboxylic acid cycle; (S)-malate from fumarate: step 1/1. In terms of biological role, involved in the TCA cycle. Catalyzes the stereospecific interconversion of fumarate to L-malate. The sequence is that of Fumarate hydratase class II from Pseudomonas syringae pv. tomato (strain ATCC BAA-871 / DC3000).